We begin with the raw amino-acid sequence, 971 residues long: Unconventional myosin-XIX (971 aa).

The interval 1-25 is disordered; sequence MSRPLSKNTEREPKQINGHQNNLSN. The 708-residue stretch at 48–755 folds into the Myosin motor domain; the sequence is HLYDDLTKVN…MVELLEERRL (708 aa). 145-152 is an ATP binding site; it reads GESGAGKT. Residues 611-633 form an actin-binding region; it reads LESLMQILHSTTPHYIRCIKPNV. IQ domains lie at 758-787 and 780-809; these read ISSK…ATTI and QSKA…AATV. The tract at residues 826–971 is myMOMA region; sequence AAELDDSTED…FNEILLEKTV (146 aa).

It belongs to the TRAFAC class myosin-kinesin ATPase superfamily. Myosin family. As to quaternary structure, myosin is a hexamer of 2 heavy chains and 4 light chains.

The protein resides in the mitochondrion outer membrane. Its subcellular location is the cytoplasm. The protein localises to the cytoskeleton. Its function is as follows. Actin-based motor molecule with ATPase activity that localizes to the mitochondrion outer membrane. Motor protein that moves towards the plus-end of actin filaments. Required for mitochondrial inheritance during mitosis. May be involved in mitochondrial transport or positioning. This Xenopus laevis (African clawed frog) protein is Unconventional myosin-XIX.